The following is a 361-amino-acid chain: tRNA N6-adenosine threonylcarbamoyltransferase (361 aa).

Fe cation contacts are provided by H110 and H114. Substrate contacts are provided by residues 132 to 136, D165, G178, D182, and N289; that span reads LVSGG. D317 is a binding site for Fe cation.

It belongs to the KAE1 / TsaD family. Fe(2+) is required as a cofactor.

Its subcellular location is the cytoplasm. It carries out the reaction L-threonylcarbamoyladenylate + adenosine(37) in tRNA = N(6)-L-threonylcarbamoyladenosine(37) in tRNA + AMP + H(+). Functionally, required for the formation of a threonylcarbamoyl group on adenosine at position 37 (t(6)A37) in tRNAs that read codons beginning with adenine. Is involved in the transfer of the threonylcarbamoyl moiety of threonylcarbamoyl-AMP (TC-AMP) to the N6 group of A37, together with TsaE and TsaB. TsaD likely plays a direct catalytic role in this reaction. The protein is tRNA N6-adenosine threonylcarbamoyltransferase of Nitratidesulfovibrio vulgaris (strain ATCC 29579 / DSM 644 / CCUG 34227 / NCIMB 8303 / VKM B-1760 / Hildenborough) (Desulfovibrio vulgaris).